A 210-amino-acid polypeptide reads, in one-letter code: Outer-membrane lipoprotein carrier protein (210 aa).

Residues 1 to 26 form the signal peptide; sequence MHMIRRAAGALAVFAVAALAAAPAWA.

It belongs to the LolA family. As to quaternary structure, monomer.

It localises to the periplasm. In terms of biological role, participates in the translocation of lipoproteins from the inner membrane to the outer membrane. Only forms a complex with a lipoprotein if the residue after the N-terminal Cys is not an aspartate (The Asp acts as a targeting signal to indicate that the lipoprotein should stay in the inner membrane). This Bordetella bronchiseptica (strain ATCC BAA-588 / NCTC 13252 / RB50) (Alcaligenes bronchisepticus) protein is Outer-membrane lipoprotein carrier protein.